A 449-amino-acid chain; its full sequence is MAAQAAPELAKLDLNKNTGSAEASTVPASGSDKDDAENEGDSDDDRDDEQTGGSAEVNAEKKKKKKRPKKKKKTAKVQSVPPRIPLTTLFPNNSFPEGEIVEYLNENSYRTTNEEKRHLDRMNNDFLAEYRQAAEIHRQVRQYAQKELIKPGATLTDIAEGIEDGVRHLTGHLGLEEGDSLVAGMGFPTGLNINHCAAHYSPNAGNKVVLQHGDVMKVDFGVHVNGRIVDSAFTVAFDPVFDPLLTAVKEATNTGIKEAGIDVRMSDIGAAIQETMESYELELNGTSYPIKAIRNLNGHTIGQYEIHGGVNGKSVPIVKGGDQTKMEEGETYAIETFGSTGKGYVRDDMETSHYAKVPSAPSVPLRLTSAKNLYSLINKNFGTLPFCRRYLDRLGQEKYLLGLNNLVSSGLVDAYPPLCDVKGSYTAQFEHTILLRPNVKEVISRGDDY.

The tract at residues 1–91 (MAAQAAPELA…PRIPLTTLFP (91 aa)) is disordered. A compositionally biased stretch (polar residues) spans 15-28 (NKNTGSAEASTVPA). Acidic residues predominate over residues 34-50 (DDAENEGDSDDDRDDEQ). The span at 61–75 (KKKKKKRPKKKKKTA) shows a compositional bias: basic residues. A substrate-binding site is contributed by histidine 199. Positions 219, 230, and 299 each coordinate a divalent metal cation. Histidine 307 contacts substrate. Residues glutamate 335 and glutamate 430 each coordinate a divalent metal cation.

Belongs to the peptidase M24A family. Methionine aminopeptidase eukaryotic type 2 subfamily. Co(2+) serves as cofactor. Zn(2+) is required as a cofactor. It depends on Mn(2+) as a cofactor. The cofactor is Fe(2+).

It is found in the cytoplasm. It carries out the reaction Release of N-terminal amino acids, preferentially methionine, from peptides and arylamides.. Its function is as follows. Cotranslationally removes the N-terminal methionine from nascent proteins. The N-terminal methionine is often cleaved when the second residue in the primary sequence is small and uncharged (Met-Ala-, Cys, Gly, Pro, Ser, Thr, or Val). The polypeptide is Methionine aminopeptidase 2-2 (Arthroderma gypseum (strain ATCC MYA-4604 / CBS 118893) (Microsporum gypseum)).